The primary structure comprises 489 residues: Protein P7 (489 aa).

2 RNA-binding regions span residues 129–251 (TSLI…GRML) and 321–351 (AGDY…FQVN).

It belongs to the phytoreovirus protein P7 family.

It localises to the virion. Its subcellular location is the host cytoplasm. In terms of biological role, probable component of the transcriptional machinery present in the inner capsid. Displays dsRNA binding activity and may play an important role in the sorting of viral RNA and virion assembly. Together with the RNA-directed RNA polymerase P1 and capping enzyme P5, forms an transcriptional complex positioned near the channels situated at each of the five-fold vertices of the core. This Rice gall dwarf virus (RGDV) protein is Protein P7.